The following is a 104-amino-acid chain: Complex III assembly factor LYRM7 (104 aa).

Position 60 is a phosphoserine (S60).

Belongs to the complex I LYR family. In terms of assembly, interacts with UQCRFS1.

It localises to the mitochondrion matrix. In terms of biological role, assembly factor required for Rieske Fe-S protein UQCRFS1 incorporation into the cytochrome b-c1 (CIII) complex. Functions as a chaperone, binding to this subunit within the mitochondrial matrix and stabilizing it prior to its translocation and insertion into the late CIII dimeric intermediate within the mitochondrial inner membrane. This chain is Complex III assembly factor LYRM7 (LYRM7), found in Pongo abelii (Sumatran orangutan).